We begin with the raw amino-acid sequence, 88 residues long: Putative sulfur carrier protein AF_0552 (88 aa).

It belongs to the sulfur carrier protein CysO family.

The polypeptide is Putative sulfur carrier protein AF_0552 (Archaeoglobus fulgidus (strain ATCC 49558 / DSM 4304 / JCM 9628 / NBRC 100126 / VC-16)).